The primary structure comprises 117 residues: Large ribosomal subunit protein uL18 (117 aa).

It belongs to the universal ribosomal protein uL18 family. In terms of assembly, part of the 50S ribosomal subunit; part of the 5S rRNA/L5/L18/L25 subcomplex. Contacts the 5S and 23S rRNAs.

Functionally, this is one of the proteins that bind and probably mediate the attachment of the 5S RNA into the large ribosomal subunit, where it forms part of the central protuberance. The sequence is that of Large ribosomal subunit protein uL18 from Yersinia enterocolitica serotype O:8 / biotype 1B (strain NCTC 13174 / 8081).